The primary structure comprises 49 residues: Light-harvesting protein B-875 beta chain (49 aa).

The Cytoplasmic portion of the chain corresponds to 2 to 27; it reads ADKSDLGYTGLTDEQAQELHSVYMSG. Residues histidine 21 and histidine 39 each contribute to the a bacteriochlorophyll site. The helical; Signal-anchor for type II membrane protein transmembrane segment at 28-45 threads the bilayer; the sequence is LWLFSAVAIVAHLAVYIW. Residues 46–49 lie on the Periplasmic side of the membrane; the sequence is RPWF.

Belongs to the antenna complex beta subunit family. The core complex is formed by different alpha and beta chains, binding bacteriochlorophyll molecules, and arranged most probably in tetrameric structures disposed around the reaction center. The non-pigmented gamma chains may constitute additional components.

The protein localises to the cell inner membrane. Functionally, antenna complexes are light-harvesting systems, which transfer the excitation energy to the reaction centers. This is Light-harvesting protein B-875 beta chain (pufB) from Cereibacter sphaeroides (strain ATCC 17023 / DSM 158 / JCM 6121 / CCUG 31486 / LMG 2827 / NBRC 12203 / NCIMB 8253 / ATH 2.4.1.) (Rhodobacter sphaeroides).